The following is a 427-amino-acid chain: Putative ABC transporter substrate-binding protein YesO (427 aa).

It belongs to the bacterial solute-binding protein 1 family.

May play a role in the degradation of type I rhamnogalacturonan derived from plant cell walls. This chain is Putative ABC transporter substrate-binding protein YesO (yesO), found in Bacillus subtilis (strain 168).